The following is a 340-amino-acid chain: Fructose-1,6-bisphosphatase class 1 (340 aa).

Residues glutamate 107, aspartate 126, leucine 128, and aspartate 129 each coordinate Mg(2+). Asparagine 215 contacts substrate. Glutamate 287 lines the Mg(2+) pocket.

Belongs to the FBPase class 1 family. In terms of assembly, homotetramer. Mg(2+) is required as a cofactor.

It is found in the cytoplasm. The catalysed reaction is beta-D-fructose 1,6-bisphosphate + H2O = beta-D-fructose 6-phosphate + phosphate. It functions in the pathway carbohydrate biosynthesis; gluconeogenesis. In Brucella ovis (strain ATCC 25840 / 63/290 / NCTC 10512), this protein is Fructose-1,6-bisphosphatase class 1.